The primary structure comprises 101 residues: Small ribosomal subunit protein uS14 (101 aa).

The segment at 1-25 is disordered; it reads MAKVSAIQKNKSRQKKSQRLHNKRS. Over residues 10-25 the composition is skewed to basic residues; the sequence is NKSRQKKSQRLHNKRS.

Belongs to the universal ribosomal protein uS14 family. Part of the 30S ribosomal subunit. Contacts proteins S3 and S10.

Its function is as follows. Binds 16S rRNA, required for the assembly of 30S particles and may also be responsible for determining the conformation of the 16S rRNA at the A site. The chain is Small ribosomal subunit protein uS14 from Rickettsia typhi (strain ATCC VR-144 / Wilmington).